The primary structure comprises 116 residues: Protein alpha-2 (116 aa).

In Bos taurus (Bovine), this protein is Protein alpha-2 (alpha).